The sequence spans 95 residues: Large ribosomal subunit protein bL25 (95 aa).

It belongs to the bacterial ribosomal protein bL25 family. As to quaternary structure, part of the 50S ribosomal subunit; part of the 5S rRNA/L5/L18/L25 subcomplex. Contacts the 5S rRNA. Binds to the 5S rRNA independently of L5 and L18.

In terms of biological role, this is one of the proteins that binds to the 5S RNA in the ribosome where it forms part of the central protuberance. This is Large ribosomal subunit protein bL25 from Tolumonas auensis (strain DSM 9187 / NBRC 110442 / TA 4).